Reading from the N-terminus, the 105-residue chain is Large ribosomal subunit protein eL30 (105 aa).

It belongs to the eukaryotic ribosomal protein eL30 family.

The polypeptide is Large ribosomal subunit protein eL30 (RPL30) (Candida glabrata (strain ATCC 2001 / BCRC 20586 / JCM 3761 / NBRC 0622 / NRRL Y-65 / CBS 138) (Yeast)).